The chain runs to 552 residues: Hyaluronan synthase 2 (552 aa).

Residues 1–11 lie on the Cytoplasmic side of the membrane; it reads MHCERFLCVLR. The helical transmembrane segment at 12–32 threads the bilayer; it reads IIGTTLFGVSLLLGITAAYIV. At 33 to 45 the chain is on the extracellular side; the sequence is GYQFIQTDNYYFS. Residues 46-66 traverse the membrane as a helical segment; sequence FGLYGAFLASHLIIQSLFAFL. At 67-374 the chain is on the cytoplasmic side; the sequence is EHRKMKKSLE…NAMWFHKHHL (308 aa). Thr-110 carries the post-translational modification Phosphothreonine. Lys-190 participates in a covalent cross-link: Glycyl lysine isopeptide (Lys-Gly) (interchain with G-Cter in ubiquitin). A glycan (O-linked (GlcNAc) serine) is linked at Ser-221. Thr-328 carries the post-translational modification Phosphothreonine. The helical transmembrane segment at 375-395 threads the bilayer; sequence WMTYEAVITGFFPFFLIATVI. Topologically, residues 396–402 are extracellular; the sequence is QLFYRGK. Residues 403 to 423 traverse the membrane as a helical segment; sequence IWNILLFLLTVQLVGLIKSSF. The Cytoplasmic segment spans residues 424–429; it reads ASCLRG. A helical membrane pass occupies residues 430 to 450; sequence NIVMVFMSLYSVLYMSSLLPA. Residues 451-475 are Extracellular-facing; that stretch reads KMFAIATINKAGWGTSGRKTIVVNF. A helical transmembrane segment spans residues 476 to 496; it reads IGLIPVSVWFTILLGGVIFTI. At 497–510 the chain is on the cytoplasmic side; sequence YKESKKPFSESKQT. The chain crosses the membrane as a helical span at residues 511–531; that stretch reads VLIVGTLIYACYWVMLLTLYV. The Extracellular segment spans residues 532-552; that stretch reads VLINKCGRRKKGQQYDMVLDV.

This sequence belongs to the NodC/HAS family. In terms of assembly, homodimer; dimerization promotes enzymatic activity. Forms heterodimer with HAS3. Forms heterodimer with HAS1. The cofactor is Mg(2+). In terms of processing, phosphorylation at Thr-328 is essential for hyaluronan synthase activity. Post-translationally, O-GlcNAcylation at Ser-221 increases the stability of HAS2 and plasma membrane localization. Ubiquitination at Lys-190; this ubiquitination is essential for hyaluronan synthase activity and homo- or hetero-oligomerization. Can also be poly-ubiquitinated. Deubiquitinated by USP17L22/USP17 and USP4. USP17L22/USP17 efficiently removes 'Lys-63'- and 'Lys-48'-linked polyubiquitin chains, whereas USP4 preferentially removes monoubiquitination and, partially, both 'Lys-63'- and 'Lys-48'-linked polyubiquitin chain. In terms of tissue distribution, expressed in heart, brain, spleen, lung and skeletal muscle.

Its subcellular location is the cell membrane. The protein resides in the endoplasmic reticulum membrane. It is found in the vesicle. It localises to the golgi apparatus membrane. The protein localises to the lysosome. The catalysed reaction is [hyaluronan](n) + UDP-N-acetyl-alpha-D-glucosamine = N-acetyl-beta-D-glucosaminyl-(1-&gt;4)-[hyaluronan](n) + UDP + H(+). It catalyses the reaction N-acetyl-beta-D-glucosaminyl-(1-&gt;4)-[hyaluronan](n) + UDP-alpha-D-glucuronate = [hyaluronan](n+1) + UDP + H(+). It participates in glycan biosynthesis; hyaluronan biosynthesis. Its function is as follows. Catalyzes the addition of GlcNAc or GlcUA monosaccharides to the nascent hyaluronan polymer. Therefore, it is essential to hyaluronan synthesis a major component of most extracellular matrices that has a structural role in tissues architectures and regulates cell adhesion, migration and differentiation. This is one of the isozymes catalyzing that reaction and it is particularly responsible for the synthesis of high molecular mass hyaluronan. Required for the transition of endocardial cushion cells into mesenchymal cells, a process crucial for heart development. May also play a role in vasculogenesis. High molecular mass hyaluronan also play a role in early contact inhibition a process which stops cell growth when cells come into contact with each other or the extracellular matrix. Catalyzes the addition of GlcNAc or GlcUA monosaccharides to the nascent hyaluronan polymer. Therefore, it is essential to hyaluronan synthesis a major component of most extracellular matrices that has a structural role in tissues architectures and regulates cell adhesion, migration and differentiation. This is one of three isoenzymes responsible for cellular hyaluronan synthesis and it is particularly responsible for the synthesis of high molecular mass hyaluronan. The chain is Hyaluronan synthase 2 from Mus musculus (Mouse).